We begin with the raw amino-acid sequence, 421 residues long: FBD-associated F-box protein At5g56370 (421 aa).

An F-box domain is found at 1 to 52 (MDSISLLPDDFLLRILSLLPTKDVLNTSVLSKRWRYLWKLVPKLQYSLIDKN). Residues 332 to 382 (HWEEPSSVPETLMFVLETLEWRNYRGLKMENELASFLLKHSRRLKIATFSP) form the FBD domain.

The chain is FBD-associated F-box protein At5g56370 from Arabidopsis thaliana (Mouse-ear cress).